Reading from the N-terminus, the 218-residue chain is Adenylate kinase (218 aa).

10–15 (GAGKGT) lines the ATP pocket. Residues 30–59 (STGDMLRAAVKAGTPLGVEAKKIMDAGALV) are NMP. AMP is bound by residues Thr-31, Arg-36, 57-59 (ALV), 85-88 (GFPR), and Gln-92. The tract at residues 122-159 (GRRSHTASGRTYHVKYNPPKVEGKDDVTGEPLIQREDD) is LID. Residues Arg-123 and 132 to 133 (TY) each bind ATP. AMP-binding residues include Arg-156 and Arg-167. Residue Gly-203 participates in ATP binding.

The protein belongs to the adenylate kinase family. As to quaternary structure, monomer.

It localises to the cytoplasm. It catalyses the reaction AMP + ATP = 2 ADP. It participates in purine metabolism; AMP biosynthesis via salvage pathway; AMP from ADP: step 1/1. Catalyzes the reversible transfer of the terminal phosphate group between ATP and AMP. Plays an important role in cellular energy homeostasis and in adenine nucleotide metabolism. This chain is Adenylate kinase, found in Polaromonas sp. (strain JS666 / ATCC BAA-500).